The primary structure comprises 396 residues: Probable protein phosphatase 2C 25 (396 aa).

The interval 32–98 is disordered; sequence ESLSLTLSHR…SPPGGVLKRK (67 aa). Over residues 44–61 the composition is skewed to low complexity; sequence QTSSPSSPSTTVSSPKSP. Positions 139–392 constitute a PPM-type phosphatase domain; it reads GYSVYCKRGR…DDISVMLIPL (254 aa). Residues aspartate 175, glycine 176, aspartate 338, and aspartate 383 each coordinate Mn(2+).

This sequence belongs to the PP2C family. As to quaternary structure, interacts with MPK4 and MPK6. The cofactor is Mg(2+). It depends on Mn(2+) as a cofactor.

Its subcellular location is the cytoplasm. The protein resides in the nucleus. It catalyses the reaction O-phospho-L-seryl-[protein] + H2O = L-seryl-[protein] + phosphate. The catalysed reaction is O-phospho-L-threonyl-[protein] + H2O = L-threonyl-[protein] + phosphate. Protein phosphatase that negatively regulates defense respones. Inactivates MPK4 and MPK6 MAP kinases involved in stress and defense signaling. The sequence is that of Probable protein phosphatase 2C 25 from Arabidopsis thaliana (Mouse-ear cress).